The chain runs to 118 residues: Small ribosomal subunit protein uS13 (118 aa).

Residues R92–K118 are disordered.

Belongs to the universal ribosomal protein uS13 family. In terms of assembly, part of the 30S ribosomal subunit. Forms a loose heterodimer with protein S19. Forms two bridges to the 50S subunit in the 70S ribosome.

In terms of biological role, located at the top of the head of the 30S subunit, it contacts several helices of the 16S rRNA. In the 70S ribosome it contacts the 23S rRNA (bridge B1a) and protein L5 of the 50S subunit (bridge B1b), connecting the 2 subunits; these bridges are implicated in subunit movement. Contacts the tRNAs in the A and P-sites. The chain is Small ribosomal subunit protein uS13 from Pseudomonas putida (strain W619).